Reading from the N-terminus, the 92-residue chain is Small ribosomal subunit protein uS19c (92 aa).

It belongs to the universal ribosomal protein uS19 family.

Its subcellular location is the plastid. It localises to the chloroplast. Its function is as follows. Protein S19 forms a complex with S13 that binds strongly to the 16S ribosomal RNA. This chain is Small ribosomal subunit protein uS19c, found in Cicer arietinum (Chickpea).